The primary structure comprises 428 residues: Putative zinc metalloprotease SACOL1281 (428 aa).

Histidine 21 contacts Zn(2+). Glutamate 22 is a catalytic residue. Zn(2+) is bound at residue histidine 25. Transmembrane regions (helical) follow at residues 172–194, 309–331, 352–374, and 401–420; these read FLTL…IGLA, GSTY…GFSF, IISL…LIPI, and TTII…LVTW. In terms of domain architecture, PDZ spans 186–269; it reads ALVLFIGLAY…TKSVELTPKK (84 aa).

The protein belongs to the peptidase M50B family. Requires Zn(2+) as cofactor.

It is found in the cell membrane. The sequence is that of Putative zinc metalloprotease SACOL1281 from Staphylococcus aureus (strain COL).